Consider the following 1447-residue polypeptide: Netrin receptor DCC (1447 aa).

Residues 1 to 25 (MENSLRCVWVPKLAFVLFGASLFSA) form the signal peptide. Ig-like C2-type domains are found at residues 26–135 (HLQV…AKVA), 139–229 (PLRF…AEVR), 234–326 (PGLH…AELT), and 331–416 (PWFL…AQLI). Over 26–1097 (HLQVTGFQIK…GSVTPQKNSN (1072 aa)) the chain is Extracellular. 3 cysteine pairs are disulfide-bonded: Cys-61–Cys-117, Cys-161–Cys-212, and Cys-261–Cys-310. Asn-94 is a glycosylation site (N-linked (GlcNAc...) asparagine). Residues Asn-299 and Asn-318 are each glycosylated (N-linked (GlcNAc...) asparagine). An intrachain disulfide couples Cys-352 to Cys-400. 6 consecutive Fibronectin type-III domains span residues 431-524 (APRD…TQPE), 530-620 (PVEN…TLSD), 625-718 (PPQN…TPEN), 728-821 (QPSS…TDPT), 846-942 (PPVG…TYEA), and 947-1044 (APKD…TLKV). An N-linked (GlcNAc...) asparagine glycan is attached at Asn-478. Residues Asn-628 and Asn-702 are each glycosylated (N-linked (GlcNAc...) asparagine). The chain crosses the membrane as a helical span at residues 1098–1122 (LLVIIVVTVGVITVLVVVIVAVICT). At 1123 to 1447 (RRSSAQQRKK…QLNAITGSAF (325 aa)) the chain is on the cytoplasmic side. 2 disordered regions span residues 1126–1152 (SAQQ…RPPD) and 1165–1222 (IEKP…TLER). Positions 1129-1143 (QRKKRATHSAGKRKG) are enriched in basic residues. Ser-1178 is modified (phosphoserine; by MAPK1). The segment covering 1179-1221 (PIQSCQDLTPVSHSQSETQLGSKSTSHSGQDTEEAGSSMSTLE) has biased composition (polar residues). Thr-1187 is subject to Phosphothreonine; by MAPK1. Position 1267 is a phosphoserine; by MAPK1 (Ser-1267). 2 disordered regions span residues 1288–1330 (SVDR…PSRT) and 1394–1419 (LLPV…SANV). Over residues 1297–1310 (RSQSVSEGPTTQQP) the composition is skewed to polar residues. The interaction with MYO10 stretch occupies residues 1432 to 1439 (LEGLMKQL).

The protein belongs to the immunoglobulin superfamily. DCC family. In terms of assembly, interacts with the cytoplasmic part of UNC5A, UNC5B, UNC5C and probably UNC5D. Interacts with DSCAM. Interacts with PTK2/FAK1 and MAPK1. Interacts with NTN1. Interacts with MYO10. Interacts with CBLN4; this interaction can be competed by NTN1. Interacts with SIAH1 and SIAH2. In terms of processing, ubiquitinated; mediated by SIAH1 or SIAH2 and leading to its subsequent proteasomal degradation. In terms of tissue distribution, found in axons of the central and peripheral nervous system and in differentiated cell types of the intestine. Not expressed in colorectal tumor cells that lost their capacity to differentiate into mucus producing cells.

The protein resides in the membrane. In terms of biological role, receptor for netrin required for axon guidance. Mediates axon attraction of neuronal growth cones in the developing nervous system upon ligand binding. Its association with UNC5 proteins may trigger signaling for axon repulsion. It also acts as a dependence receptor required for apoptosis induction when not associated with netrin ligand. Implicated as a tumor suppressor gene. The polypeptide is Netrin receptor DCC (DCC) (Homo sapiens (Human)).